The chain runs to 899 residues: Protein translocase subunit SecA (899 aa).

ATP-binding positions include Q87, 105–109 (GEGKT), and D512. The tract at residues 846–899 (MEEEQQQQAQKKIVFNLGEEPATAPQPARSKKSASRNDPCPCGSGKKYKKCCGK) is disordered. Zn(2+) is bound by residues C885, C887, C896, and C897.

Belongs to the SecA family. As to quaternary structure, monomer and homodimer. Part of the essential Sec protein translocation apparatus which comprises SecA, SecYEG and auxiliary proteins SecDF-YajC and YidC. Zn(2+) serves as cofactor.

It is found in the cell inner membrane. The protein resides in the cytoplasm. The catalysed reaction is ATP + H2O + cellular proteinSide 1 = ADP + phosphate + cellular proteinSide 2.. In terms of biological role, part of the Sec protein translocase complex. Interacts with the SecYEG preprotein conducting channel. Has a central role in coupling the hydrolysis of ATP to the transfer of proteins into and across the cell membrane, serving as an ATP-driven molecular motor driving the stepwise translocation of polypeptide chains across the membrane. In Geobacter metallireducens (strain ATCC 53774 / DSM 7210 / GS-15), this protein is Protein translocase subunit SecA.